Here is a 203-residue protein sequence, read N- to C-terminus: MKKLLVACCLLSGFASTSVLADAAQDLQSRLAKVNSFHASFSQTVTSSDGAAVQQGEGELWVKRPNLFNWHMTSPDESVLVSDGQTLWFYNPFVEQVTATWLKNATGNTPFMLITRNNANDWKQYNVKQKGNDFELTPKSSSGNLKQFAISVDNSGTIRNFAAVEQDGQRSSYTLKSQQNVAADASKFKFTPPKGVTLDDQRQ.

The first 21 residues, M1–A21, serve as a signal peptide directing secretion.

It belongs to the LolA family. Monomer.

The protein resides in the periplasm. In terms of biological role, participates in the translocation of lipoproteins from the inner membrane to the outer membrane. Only forms a complex with a lipoprotein if the residue after the N-terminal Cys is not an aspartate (The Asp acts as a targeting signal to indicate that the lipoprotein should stay in the inner membrane). The protein is Outer-membrane lipoprotein carrier protein of Serratia proteamaculans (strain 568).